Consider the following 353-residue polypeptide: Phospho-N-acetylmuramoyl-pentapeptide-transferase (353 aa).

10 consecutive transmembrane segments (helical) span residues 22–42 (FAFF…ITWA), 65–85 (TPTM…LFCI), 88–108 (DNIF…IGLI), 129–149 (LLAQ…SSEL), 161–181 (PLFD…ISSS), 192–212 (GLAT…LYLS), 228–248 (GLGE…GFLW), 256–276 (VFMG…LAII), 281–301 (ILLL…ILQV), and 330–350 (KIIV…LASI).

This sequence belongs to the glycosyltransferase 4 family. MraY subfamily. Requires Mg(2+) as cofactor.

The protein localises to the cell inner membrane. The catalysed reaction is UDP-N-acetyl-alpha-D-muramoyl-L-alanyl-gamma-D-glutamyl-meso-2,6-diaminopimeloyl-D-alanyl-D-alanine + di-trans,octa-cis-undecaprenyl phosphate = di-trans,octa-cis-undecaprenyl diphospho-N-acetyl-alpha-D-muramoyl-L-alanyl-D-glutamyl-meso-2,6-diaminopimeloyl-D-alanyl-D-alanine + UMP. It participates in cell wall biogenesis; peptidoglycan biosynthesis. In terms of biological role, catalyzes the initial step of the lipid cycle reactions in the biosynthesis of the cell wall peptidoglycan: transfers peptidoglycan precursor phospho-MurNAc-pentapeptide from UDP-MurNAc-pentapeptide onto the lipid carrier undecaprenyl phosphate, yielding undecaprenyl-pyrophosphoryl-MurNAc-pentapeptide, known as lipid I. This Campylobacter jejuni subsp. jejuni serotype O:6 (strain 81116 / NCTC 11828) protein is Phospho-N-acetylmuramoyl-pentapeptide-transferase.